Consider the following 279-residue polypeptide: Thymidylate synthase (279 aa).

R29 lines the dUMP pocket. (6R)-5,10-methylene-5,6,7,8-tetrahydrofolate is bound at residue H59. Position 134–135 (134–135) interacts with dUMP; the sequence is RR. The active-site Nucleophile is C154. Residues 181 to 184, N192, and 222 to 224 contribute to the dUMP site; these read RSAD and HIY. D184 serves as a coordination point for (6R)-5,10-methylene-5,6,7,8-tetrahydrofolate. A278 provides a ligand contact to (6R)-5,10-methylene-5,6,7,8-tetrahydrofolate.

This sequence belongs to the thymidylate synthase family. Bacterial-type ThyA subfamily. Homodimer.

It is found in the cytoplasm. It carries out the reaction dUMP + (6R)-5,10-methylene-5,6,7,8-tetrahydrofolate = 7,8-dihydrofolate + dTMP. The protein operates within pyrimidine metabolism; dTTP biosynthesis. Functionally, catalyzes the reductive methylation of 2'-deoxyuridine-5'-monophosphate (dUMP) to 2'-deoxythymidine-5'-monophosphate (dTMP) while utilizing 5,10-methylenetetrahydrofolate (mTHF) as the methyl donor and reductant in the reaction, yielding dihydrofolate (DHF) as a by-product. This enzymatic reaction provides an intracellular de novo source of dTMP, an essential precursor for DNA biosynthesis. The protein is Thymidylate synthase of Paracidovorax citrulli (strain AAC00-1) (Acidovorax citrulli).